A 638-amino-acid chain; its full sequence is Chaperone protein HtpG (638 aa).

The tract at residues 1 to 344 is a; substrate-binding; that stretch reads MQKKETLEFQ…SNDLPLNVSR (344 aa). The segment at 345-560 is b; sequence EILQNNENIY…ENDITTQMSK (216 aa). The tract at residues 561-638 is c; it reads LLISTGQESP…LLLSNIIRLN (78 aa).

Belongs to the heat shock protein 90 family. In terms of assembly, homodimer.

Its subcellular location is the cytoplasm. Its function is as follows. Molecular chaperone. Has ATPase activity. The polypeptide is Chaperone protein HtpG (Wigglesworthia glossinidia brevipalpis).